Reading from the N-terminus, the 288-residue chain is Pyridoxal kinase PdxY (288 aa).

Residues Ser-10 and 45 to 46 (TQ) contribute to the substrate site. The ATP site is built by Asp-112, Ala-143, Glu-148, and Lys-181. Asp-222 is a binding site for substrate.

This sequence belongs to the pyridoxine kinase family. PdxY subfamily. In terms of assembly, homodimer. The cofactor is Mg(2+).

It catalyses the reaction pyridoxal + ATP = pyridoxal 5'-phosphate + ADP + H(+). It functions in the pathway cofactor metabolism; pyridoxal 5'-phosphate salvage; pyridoxal 5'-phosphate from pyridoxal: step 1/1. Its function is as follows. Pyridoxal kinase involved in the salvage pathway of pyridoxal 5'-phosphate (PLP). Catalyzes the phosphorylation of pyridoxal to PLP. In Paraburkholderia xenovorans (strain LB400), this protein is Pyridoxal kinase PdxY.